The sequence spans 117 residues: UPF0102 protein FTW_1281 (117 aa).

This sequence belongs to the UPF0102 family.

The polypeptide is UPF0102 protein FTW_1281 (Francisella tularensis subsp. tularensis (strain WY96-3418)).